The chain runs to 431 residues: Adenylosuccinate synthetase (431 aa).

Residues 12–18 and 40–42 contribute to the GTP site; these read GDEGKGK and GHT. Residue Asp13 is the Proton acceptor of the active site. 2 residues coordinate Mg(2+): Asp13 and Gly40. IMP contacts are provided by residues 13–16, 38–41, Thr131, Arg145, Gln225, Thr240, and Arg304; these read DEGK and NAGH. The active-site Proton donor is His41. Residue 300–306 coordinates substrate; sequence VNTGRPR. GTP-binding positions include Arg306, 332-334, and 414-416; these read KLD and STS.

It belongs to the adenylosuccinate synthetase family. In terms of assembly, homodimer. Requires Mg(2+) as cofactor.

It localises to the cytoplasm. The enzyme catalyses IMP + L-aspartate + GTP = N(6)-(1,2-dicarboxyethyl)-AMP + GDP + phosphate + 2 H(+). The protein operates within purine metabolism; AMP biosynthesis via de novo pathway; AMP from IMP: step 1/2. In terms of biological role, plays an important role in the de novo pathway of purine nucleotide biosynthesis. Catalyzes the first committed step in the biosynthesis of AMP from IMP. The sequence is that of Adenylosuccinate synthetase from Rhizobium rhizogenes (strain K84 / ATCC BAA-868) (Agrobacterium radiobacter).